Here is a 437-residue protein sequence, read N- to C-terminus: Adenylosuccinate synthetase (437 aa).

GTP-binding positions include Gly12–Lys18 and Gly40–Thr42. The Proton acceptor role is filled by Asp13. Positions 13 and 40 each coordinate Mg(2+). IMP-binding positions include Asp13–Lys16, Asn38–His41, Thr128, Arg142, Gln223, Thr238, and Arg302. His41 (proton donor) is an active-site residue. Thr298–Arg304 provides a ligand contact to substrate. GTP contacts are provided by residues Arg304, Lys330–Asp332, and Ser412–Gly414.

It belongs to the adenylosuccinate synthetase family. As to quaternary structure, homodimer. The cofactor is Mg(2+).

It localises to the cytoplasm. It catalyses the reaction IMP + L-aspartate + GTP = N(6)-(1,2-dicarboxyethyl)-AMP + GDP + phosphate + 2 H(+). Its pathway is purine metabolism; AMP biosynthesis via de novo pathway; AMP from IMP: step 1/2. Plays an important role in the de novo pathway of purine nucleotide biosynthesis. Catalyzes the first committed step in the biosynthesis of AMP from IMP. The chain is Adenylosuccinate synthetase from Prochlorococcus marinus (strain MIT 9313).